A 175-amino-acid chain; its full sequence is Large ribosomal subunit protein uL10 (175 aa).

Belongs to the universal ribosomal protein uL10 family. In terms of assembly, part of the ribosomal stalk of the 50S ribosomal subunit. The N-terminus interacts with L11 and the large rRNA to form the base of the stalk. The C-terminus forms an elongated spine to which L12 dimers bind in a sequential fashion forming a multimeric L10(L12)X complex.

Its function is as follows. Forms part of the ribosomal stalk, playing a central role in the interaction of the ribosome with GTP-bound translation factors. The chain is Large ribosomal subunit protein uL10 from Methylobacterium sp. (strain 4-46).